Here is a 446-residue protein sequence, read N- to C-terminus: Adenylosuccinate synthetase (446 aa).

GTP-binding positions include 12–18 and 40–42; these read GDEGKGK and GHT. Catalysis depends on Asp13, which acts as the Proton acceptor. Positions 13 and 40 each coordinate Mg(2+). IMP contacts are provided by residues 13–16, 38–41, Thr128, Arg142, Gln223, Thr238, and Arg302; these read DEGK and NAGH. His41 acts as the Proton donor in catalysis. Residue 298-304 coordinates substrate; it reads TTTGRRR. GTP-binding positions include Arg304, 330-332, and 412-414; these read KLD and SLG.

The protein belongs to the adenylosuccinate synthetase family. Homodimer. The cofactor is Mg(2+).

It localises to the cytoplasm. The catalysed reaction is IMP + L-aspartate + GTP = N(6)-(1,2-dicarboxyethyl)-AMP + GDP + phosphate + 2 H(+). It functions in the pathway purine metabolism; AMP biosynthesis via de novo pathway; AMP from IMP: step 1/2. Plays an important role in the de novo pathway of purine nucleotide biosynthesis. Catalyzes the first committed step in the biosynthesis of AMP from IMP. The chain is Adenylosuccinate synthetase from Crocosphaera subtropica (strain ATCC 51142 / BH68) (Cyanothece sp. (strain ATCC 51142)).